Reading from the N-terminus, the 61-residue chain is Large ribosomal subunit protein uL30 (61 aa).

The protein belongs to the universal ribosomal protein uL30 family. As to quaternary structure, part of the 50S ribosomal subunit.

The chain is Large ribosomal subunit protein uL30 from Saccharophagus degradans (strain 2-40 / ATCC 43961 / DSM 17024).